Here is a 494-residue protein sequence, read N- to C-terminus: Putative glucuronosyltransferase PGSIP7 (494 aa).

Residues 4–24 (QRTLMFSCWVLSLLIIKTTAY) traverse the membrane as a helical segment. Mn(2+) contacts are provided by aspartate 161 and aspartate 163. 5 consecutive transmembrane segments (helical) span residues 316-336 (YSAE…IILV), 362-382 (AFKF…FFII), 389-409 (LIGW…PINA), 410-430 (FLLP…TLLV), and 444-464 (LSVF…FVKI).

It belongs to the glycosyltransferase 8 family. Glycogenin subfamily. Mn(2+) serves as cofactor.

It localises to the membrane. The chain is Putative glucuronosyltransferase PGSIP7 (PGSIP7) from Arabidopsis thaliana (Mouse-ear cress).